A 308-amino-acid chain; its full sequence is Ornithine carbamoyltransferase (308 aa).

Residues 56–59, Gln-83, Arg-107, and 134–137 contribute to the carbamoyl phosphate site; these read STRT and HPCQ. Residues Asn-165, Asp-225, and 229–230 each bind L-ornithine; that span reads SM. Carbamoyl phosphate contacts are provided by residues 266 to 267 and Arg-294; that span reads CL.

The protein belongs to the aspartate/ornithine carbamoyltransferase superfamily. OTCase family.

The protein localises to the cytoplasm. It catalyses the reaction carbamoyl phosphate + L-ornithine = L-citrulline + phosphate + H(+). It functions in the pathway amino-acid biosynthesis; L-arginine biosynthesis; L-arginine from L-ornithine and carbamoyl phosphate: step 1/3. Reversibly catalyzes the transfer of the carbamoyl group from carbamoyl phosphate (CP) to the N(epsilon) atom of ornithine (ORN) to produce L-citrulline. This chain is Ornithine carbamoyltransferase, found in Cereibacter sphaeroides (strain ATCC 17023 / DSM 158 / JCM 6121 / CCUG 31486 / LMG 2827 / NBRC 12203 / NCIMB 8253 / ATH 2.4.1.) (Rhodobacter sphaeroides).